The chain runs to 91 residues: MRRRCCISYLINSRPNHAKQIVTASHFITSSFQPLTTMTCFIKPLTLNVFNLYSLVANSKYYKIDAVPCKHEANNKPRRILPVDDQPKHQP.

This is an uncharacterized protein from Archaeoglobus fulgidus (strain ATCC 49558 / DSM 4304 / JCM 9628 / NBRC 100126 / VC-16).